A 433-amino-acid chain; its full sequence is Phosphomethylpyrimidine synthase (433 aa).

Substrate contacts are provided by residues asparagine 66, methionine 94, tyrosine 123, histidine 162, 184 to 186 (SRG), 225 to 228 (DALR), and glutamate 264. A Zn(2+)-binding site is contributed by histidine 268. Tyrosine 291 contacts substrate. Histidine 332 contacts Zn(2+). [4Fe-4S] cluster-binding residues include cysteine 408, cysteine 411, and cysteine 415.

The protein belongs to the ThiC family. It depends on [4Fe-4S] cluster as a cofactor.

The catalysed reaction is 5-amino-1-(5-phospho-beta-D-ribosyl)imidazole + S-adenosyl-L-methionine = 4-amino-2-methyl-5-(phosphooxymethyl)pyrimidine + CO + 5'-deoxyadenosine + formate + L-methionine + 3 H(+). Its pathway is cofactor biosynthesis; thiamine diphosphate biosynthesis. In terms of biological role, catalyzes the synthesis of the hydroxymethylpyrimidine phosphate (HMP-P) moiety of thiamine from aminoimidazole ribotide (AIR) in a radical S-adenosyl-L-methionine (SAM)-dependent reaction. The polypeptide is Phosphomethylpyrimidine synthase (Saccharolobus islandicus (strain M.16.27) (Sulfolobus islandicus)).